A 451-amino-acid polypeptide reads, in one-letter code: Phosphoglucosamine mutase (451 aa).

The active-site Phosphoserine intermediate is the Ser102. Residues Ser102, Asp243, Asp245, and Asp247 each coordinate Mg(2+). Phosphoserine is present on Ser102.

This sequence belongs to the phosphohexose mutase family. Requires Mg(2+) as cofactor. In terms of processing, activated by phosphorylation.

It carries out the reaction alpha-D-glucosamine 1-phosphate = D-glucosamine 6-phosphate. In terms of biological role, catalyzes the conversion of glucosamine-6-phosphate to glucosamine-1-phosphate. This Brucella abortus (strain 2308) protein is Phosphoglucosamine mutase.